A 166-amino-acid chain; its full sequence is Phospholipase A2 inhibitor clone 06/08 (166 aa).

The N-terminal stretch at 1–19 (MRLILLSGLLLLGIFLANG) is a signal peptide. Residues 46 to 161 (LRGAFLTVYK…CDDNLLVVCE (116 aa)) enclose the C-type lectin domain. N61 and N122 each carry an N-linked (GlcNAc...) asparagine glycan. Cystine bridges form between C83-C160 and C138-C152.

It belongs to the alpha-type phospholipase A2 inhibitor family. Homotrimer; non-covalently linked. As to expression, expressed by the liver.

The protein resides in the secreted. Functionally, this phospholipase A2 inhibitor binds directly phospholipase A2 in the presence or absence of calcium. This is Phospholipase A2 inhibitor clone 06/08 from Bothrops neuwiedi (Neuwied's lancehead).